Reading from the N-terminus, the 257-residue chain is Pyridoxal phosphate homeostasis protein (257 aa).

An N-acetylserine modification is found at Ser2. The residue at position 49 (Lys49) is an N6-(pyridoxal phosphate)lysine.

It belongs to the pyridoxal phosphate-binding protein YggS/PROSC family.

It localises to the cytoplasm. It is found in the nucleus. Its function is as follows. Pyridoxal 5'-phosphate (PLP)-binding protein, which may be involved in intracellular homeostatic regulation of pyridoxal 5'-phosphate (PLP), the active form of vitamin B6. This is Pyridoxal phosphate homeostasis protein from Saccharomyces cerevisiae (strain ATCC 204508 / S288c) (Baker's yeast).